Consider the following 302-residue polypeptide: Sulfate adenylyltransferase subunit 2 (302 aa).

The segment at 279–302 (ERQGRAIDHDSSGSMELKKRQGYF) is disordered. Residues 280 to 302 (RQGRAIDHDSSGSMELKKRQGYF) are compositionally biased toward basic and acidic residues.

The protein belongs to the PAPS reductase family. CysD subfamily. In terms of assembly, heterodimer composed of CysD, the smaller subunit, and CysN.

The catalysed reaction is sulfate + ATP + H(+) = adenosine 5'-phosphosulfate + diphosphate. Its pathway is sulfur metabolism; hydrogen sulfide biosynthesis; sulfite from sulfate: step 1/3. Its function is as follows. With CysN forms the ATP sulfurylase (ATPS) that catalyzes the adenylation of sulfate producing adenosine 5'-phosphosulfate (APS) and diphosphate, the first enzymatic step in sulfur assimilation pathway. APS synthesis involves the formation of a high-energy phosphoric-sulfuric acid anhydride bond driven by GTP hydrolysis by CysN coupled to ATP hydrolysis by CysD. This Aliivibrio fischeri (strain ATCC 700601 / ES114) (Vibrio fischeri) protein is Sulfate adenylyltransferase subunit 2.